The following is a 267-amino-acid chain: Stage 0 sporulation protein A (267 aa).

The 119-residue stretch at 5–123 (KVCVADDNRE…NLVGHIRQVS (119 aa)) folds into the Response regulatory domain. Residues Asp-10, Asp-11, and Asp-56 each contribute to the Ca(2+) site. Asp-56 bears the 4-aspartylphosphate mark. The interval 126–150 (ASSVTHRAPSSQSSIIRSSQPEPKK) is disordered. Low complexity predominate over residues 135–145 (SSQSSIIRSSQ). The H-T-H motif DNA-binding region spans 199–218 (PDIAKKFNTTASRVERAIRH).

Interacts with small protein YqaH, which is encoded in the skin prophage-like element. Requires Ca(2+) as cofactor. Post-translationally, phosphorylated by KinA and KinB.

It is found in the cytoplasm. Functionally, may play the central regulatory role in sporulation. It may be an element of the effector pathway responsible for the activation of sporulation genes in response to nutritional stress. Spo0A may act in concert with Spo0H (a sigma factor) to control the expression of some genes that are critical to the sporulation process. Repressor of abrB, activator of the spoIIa operon. Binds the DNA sequence 5'-TGNCGAA-3' (0A box). This Bacillus subtilis (strain 168) protein is Stage 0 sporulation protein A (spo0A).